The primary structure comprises 544 residues: Chaperonin GroEL 2 (544 aa).

Residues 29-32 (TLGP), 86-90 (DGTTT), G413, 479-481 (NAA), and D495 contribute to the ATP site.

This sequence belongs to the chaperonin (HSP60) family. In terms of assembly, forms a cylinder of 14 subunits composed of two heptameric rings stacked back-to-back. Interacts with the co-chaperonin GroES.

It is found in the cytoplasm. The enzyme catalyses ATP + H2O + a folded polypeptide = ADP + phosphate + an unfolded polypeptide.. Functionally, together with its co-chaperonin GroES, plays an essential role in assisting protein folding. The GroEL-GroES system forms a nano-cage that allows encapsulation of the non-native substrate proteins and provides a physical environment optimized to promote and accelerate protein folding. The protein is Chaperonin GroEL 2 of Trichodesmium erythraeum (strain IMS101).